A 536-amino-acid chain; its full sequence is Pre-mRNA-splicing factor SLU7-B (536 aa).

A disordered region spans residues 1 to 42 (MATASVAFKSREDHRKKLELEEARKAGLAPAEVDEDGKEINP). Positions 9 to 25 (KSREDHRKKLELEEARK) are enriched in basic and acidic residues. The CCHC-type zinc-finger motif lies at 96-109 (CINCGAMTHSSKAC). Disordered regions lie at residues 176–201 (LKKLEEKNNNENGDDATSDGEEDLDD) and 488–507 (KEDLSRREEKDERKRKYNVN). Residues 187–200 (NGDDATSDGEEDLD) are compositionally biased toward acidic residues. Phosphoserine is present on S193. Residues 486–493 (LKKEDLSR) carry the Nuclear localization signal motif. Positions 488 to 501 (KEDLSRREEKDERK) are enriched in basic and acidic residues.

Belongs to the SLU7 family. Interacts with PHYB in photobodies under red light.

It localises to the nucleus. In terms of biological role, participates in the second catalytic step of pre-mRNA splicing, when the free hydroxyl group of exon I attacks the 3'-splice site to generate spliced mRNA and the excised lariat intron. Splicing factor acting as a negative regulator of seedling photomorphogenesis by antagonizing PHYB signaling to promote light-induced hypocotyl elongation. Prevents the accumulation of functionally spliced RVE8a form, a circadian clock regulator mediating the transcriptional activation of clock genes containing evening elements (EE), but promotes PIF4 expression to fine-tune hypocotyl elongation in the light. Together with SMP1, involved in the timing of cell cycle arrest during leaf development, in a STRUWWELPETER (SWP) dependent manner; promotes cell proliferation in developing organs. The protein is Pre-mRNA-splicing factor SLU7-B of Arabidopsis thaliana (Mouse-ear cress).